A 301-amino-acid polypeptide reads, in one-letter code: MKVGVIMGGISSEREISIQSGNSVVHALDKDKYEAIPIVLNEKEDLIEKVKGIDFALLALHGKFGEDGTVQSVLKTLGIPFSGCGPLSSAICMDKDMTKRILAFGNVRTARWVMVSSVDEIDYEKIENLGYPVFIKPNNGGSSVATTLVESKEAVKDAVLEALKYDTEVMIEEYIKGDEITCPIIDGKMLPVLAIKPKGKFFDIASKYEDGGADEFIVKLNEDLHKEVEKMALETYKLLKCDVYARVDMLVRDNVPYVLEVNTLPGMTKNSLFPKSAAGINMSFEELLDTIIEKSLKVNRE.

The region spanning 99 to 293 is the ATP-grasp domain; the sequence is KRILAFGNVR…FEELLDTIIE (195 aa). 126-181 is a binding site for ATP; the sequence is IENLGYPVFIKPNNGGSSVATTLVESKEAVKDAVLEALKYDTEVMIEEYIKGDEIT. The Mg(2+) site is built by Asp248, Glu260, and Asn262.

This sequence belongs to the D-alanine--D-alanine ligase family. Mg(2+) serves as cofactor. It depends on Mn(2+) as a cofactor.

It is found in the cytoplasm. The catalysed reaction is 2 D-alanine + ATP = D-alanyl-D-alanine + ADP + phosphate + H(+). It participates in cell wall biogenesis; peptidoglycan biosynthesis. Functionally, cell wall formation. In Clostridium perfringens (strain SM101 / Type A), this protein is D-alanine--D-alanine ligase.